Consider the following 106-residue polypeptide: Thioredoxin-2 (106 aa).

Residues 1-106 (MVYQVKDKAD…RLEDVIKANI (106 aa)) enclose the Thioredoxin domain. Residues C32 and C35 each act as nucleophile in the active site. An intrachain disulfide couples C32 to C35.

Belongs to the thioredoxin family. As to quaternary structure, monomer.

Participates in various redox reactions through the reversible oxidation of its active center dithiol to a disulfide and catalyzes dithiol-disulfide exchange reactions. As a reducing substrate of peroxiredoxin 1, thioredoxin 2 is preferred over thioredoxin 1. This chain is Thioredoxin-2, found in Drosophila melanogaster (Fruit fly).